Reading from the N-terminus, the 226-residue chain is Elongation factor 1-delta (226 aa).

Residues Ser-82–Lys-131 are disordered. The segment covering Ala-97–Glu-113 has biased composition (acidic residues). A compositionally biased stretch (basic and acidic residues) spans Glu-114–Ala-124.

The protein belongs to the EF-1-beta/EF-1-delta family. As to quaternary structure, EF-1 is composed of 4 subunits: alpha, beta (1B-alpha=beta'), delta (1B-beta), and gamma (1B-gamma).

Its function is as follows. EF-1-beta and EF-1-beta' stimulate the exchange of GDP bound to EF-1-alpha to GTP. The sequence is that of Elongation factor 1-delta from Spuriopimpinella brachycarpa (Chamnamul).